A 31-amino-acid chain; its full sequence is MLTITSYFGFLLAALTITSVLFIGLSKIRLI.

Residues 4 to 24 (ITSYFGFLLAALTITSVLFIG) form a helical membrane-spanning segment.

The protein belongs to the PetL family. In terms of assembly, the 4 large subunits of the cytochrome b6-f complex are cytochrome b6, subunit IV (17 kDa polypeptide, PetD), cytochrome f and the Rieske protein, while the 4 small subunits are PetG, PetL, PetM and PetN. The complex functions as a dimer.

It is found in the plastid. The protein resides in the chloroplast thylakoid membrane. In terms of biological role, component of the cytochrome b6-f complex, which mediates electron transfer between photosystem II (PSII) and photosystem I (PSI), cyclic electron flow around PSI, and state transitions. PetL is important for photoautotrophic growth as well as for electron transfer efficiency and stability of the cytochrome b6-f complex. The sequence is that of Cytochrome b6-f complex subunit 6 from Arabidopsis thaliana (Mouse-ear cress).